A 378-amino-acid polypeptide reads, in one-letter code: Odorant receptor Or2 (378 aa).

Methionine 1 is a topological domain (cytoplasmic). The helical transmembrane segment at 2–22 (LIEECPIIGVNVRVWLFWSYL) threads the bilayer. Residues 23–29 (RRPRLSR) lie on the Extracellular side of the membrane. A helical membrane pass occupies residues 30–50 (FLVGCIPVAVLNVFQFLKLYS). The Cytoplasmic segment spans residues 51-59 (SWGDMSELI). Residues 60–80 (INGYFTVLYFNLVLRTSFLVI) traverse the membrane as a helical segment. The Extracellular portion of the chain corresponds to 81 to 120 (NRRKFETFFEGVAAEYALLEKNDDIRPVLERYTRRGRMLS). A helical membrane pass occupies residues 121–141 (ISNLWLGAFISACFVTYPLFV). Over 142 to 164 (PGRGLPYGVTIPGVDVLATPTYQ) the chain is Cytoplasmic. A helical transmembrane segment spans residues 165–185 (VVFVLQVYLTFPACCMYIPFT). The Extracellular portion of the chain corresponds to 186-254 (SFYATCTLFA…HDLNSLVTHL (69 aa)). A helical transmembrane segment spans residues 255–275 (CLLEFLSFGMMLCALLFLLSI). At 276–278 (SNQ) the chain is on the cytoplasmic side. The helical transmembrane segment at 279 to 299 (LAQMIMIGSYIFMILSQMFAF) threads the bilayer. The Extracellular segment spans residues 300–378 (YWHANEVLEQ…YFTLLRRVYN (79 aa)). N-linked (GlcNAc...) asparagine glycosylation is present at asparagine 364.

Belongs to the insect chemoreceptor superfamily. Heteromeric odorant receptor channel (TC 1.A.69) family. Or30a subfamily. In terms of tissue distribution, expressed in male and female antennae and maxillary palps.

It is found in the cell membrane. Functionally, odorant receptor which plays a critical role in the anthropophilic host-seeking behavior; establishes the host preference to transmit malaria. This chain is Odorant receptor Or2 (OR2), found in Anopheles gambiae (African malaria mosquito).